Consider the following 1082-residue polypeptide: TNF receptor-associated factor homolog 1b (1082 aa).

The segment at 1 to 54 (MAEAVDEDSGVGRSLEESSNGQHSQAGEALSEWRSSGQVENGTPSTSPSYWDID) is disordered. N-acetylalanine is present on A2. The segment covering 33–49 (WRSSGQVENGTPSTSPS) has biased composition (polar residues). The 132-residue stretch at 67–198 (YGQYTWKIPK…SGCLTIEAKV (132 aa)) folds into the MATH domain. Disordered stretches follow at residues 358–388 (LPPK…ERDE), 440–666 (TEQR…SNVG), 697–762 (SIVN…QVVL), 780–800 (LSAP…APII), 812–841 (SSVQ…NQQT), and 858–889 (SSSS…PTSS). Composition is skewed to basic and acidic residues over residues 359–388 (PPKD…ERDE) and 440–453 (TEQR…EREK). Residues 446-507 (RGAAEREKKS…EEEKDSVTEK (62 aa)) adopt a coiled-coil conformation. Residues 454 to 471 (KSKKKQAKQKRNKNKGKD) show a composition bias toward basic residues. Residues 472–488 (KRKEEKVSFATHAKDLE) are compositionally biased toward basic and acidic residues. Low complexity-rich tracts occupy residues 519 to 534 (GDVS…SADI) and 560 to 573 (SSEG…ISIS). Polar residues-rich tracts occupy residues 588-630 (DDSS…QQVK) and 645-666 (QPST…SNVG). Low complexity-rich tracts occupy residues 858–871 (SSSS…SSHG) and 878–889 (PSSSYSQAPTSS).

As to quaternary structure, forms homooligomers. Interacts with SNC1, RPS2 and CPR1/CPR30. Interacts with ATG6.

The protein resides in the cytoplasm. Its subcellular location is the cell membrane. Its function is as follows. Functions redundantly with TRAF1A in the regulation of plant immune response. Contributes to the turnover of the nucleotide-binding domain and leucine-rich repeat-containing (NB-LRR) immune receptors SNC1 and RPS2. May associate with an E3 ubiquitin-protein ligase complex, which modulates ubiquitination and subsequent degradation of NB-LRR immune sensors to maintain their homeostasis. Functions redundantly with TRAF1A in the regulation of autophagosome formation. Required for SINAT1- and SINAT2-mediated ubiquitination and destabilization of ATG6. Functions as a molecular adapter that helps to regulate autophagy by modulating ATG6 stability. This is TNF receptor-associated factor homolog 1b from Arabidopsis thaliana (Mouse-ear cress).